The following is a 277-amino-acid chain: Insulin-induced gene 1 protein (277 aa).

Topologically, residues 1–84 (MPRLHDHFWS…PYPNTWHHRL (84 aa)) are cytoplasmic. Positions 51–66 (HGAPDADPAPRGRSAA) are enriched in low complexity. Positions 51–73 (HGAPDADPAPRGRSAAMSGPEPG) are disordered. Residues 85–107 (LQRSLVLFSVGVVLALVLNLLQI) traverse the membrane as a helical segment. At 108-126 (QRNVTLFPEEVIATIFSSA) the chain is on the lumenal side. A helical membrane pass occupies residues 127 to 144 (WWVPPCCGTAAAVVGLLY). At 145–159 (PCIDSHLGEPHKFKR) the chain is on the cytoplasmic side. Glycyl lysine isopeptide (Lys-Gly) (interchain with G-Cter in ubiquitin) cross-links involve residues lysine 156 and lysine 158. A helical membrane pass occupies residues 160–182 (EWASVMRCIAVFVGINHASAKLD). Residues 183–185 (FAN) are Lumenal-facing. Residues 186–204 (NVQLSLTLAALSLGLWWTF) traverse the membrane as a helical segment. Residues 205 to 209 (DRSRS) lie on the Cytoplasmic side of the membrane. The residue at position 207 (serine 207) is a Phosphoserine; by PCK1. A helical transmembrane segment spans residues 210–231 (GLGLGITIAFLATLITQFLVYN). Topologically, residues 232 to 245 (GVYQYTSPDFLYIR) are lumenal. The chain crosses the membrane as a helical span at residues 246–263 (SWLPCIFFSGGVTVGNIG). Over 264 to 277 (RQLAMGVPEKPHSD) the chain is Cytoplasmic. The KxHxx signature appears at 271-277 (PEKPHSD).

It belongs to the INSIG family. As to quaternary structure, interacts with SCAP; interaction is direct and only takes place in the presence of sterols; it prevents interaction between SCAP and the coat protein complex II (COPII). Associates with the SCAP-SREBP complex (composed of SCAP and SREBF1/SREBP1 or SREBF2/SREBP2); association is mediated via its interaction with SCAP and only takes place in the presence of sterols. Interaction with SCAP is mutually exclusive with PAQR3. Interacts with HMGCR (via its SSD); the interaction, accelerated by sterols, leads to the recruitment of HMGCR to AMFR/gp78 for its ubiquitination by the sterol-mediated ERAD pathway. Interacts with AMFR/gp78 (via its membrane domain); the interaction recruits HMCR at the ER membrane for its ubiquitination and degradation by the sterol-mediated ERAD pathway. Interacts with SOAT2/ACAT2; leading to promote recruitment of AMFR/gp78 and subsequent ubiquitination of SOAT2/ACAT2. Interacts with RNF139. Interacts with RNF145. In terms of processing, phosphorylation at Ser-207 by PCK1 reduces binding to oxysterol, disrupting the interaction between INSIG1 and SCAP, thereby promoting nuclear translocation of SREBP proteins (SREBF1/SREBP1 or SREBF2/SREBP2) and subsequent transcription of downstream lipogenesis-related genes. Post-translationally, ubiquitinated by AMFR/gp78 in response to sterol deprivation, leading to its degradation: when the SCAP-SREBP complex becomes dissociated from INSIG1, INSIG1 is then ubiquitinated and degraded in proteasomes. Although ubiquitination is required for rapid INSIG1 degradation, it is not required for release of the SCAP-SREBP complex. Ubiquitinated by RNF139. In terms of tissue distribution, expressed in all tissues tested with highest expression in the liver.

The protein resides in the endoplasmic reticulum membrane. In terms of biological role, oxysterol-binding protein that mediates feedback control of cholesterol synthesis by controlling both endoplasmic reticulum to Golgi transport of SCAP and degradation of HMGCR. Acts as a negative regulator of cholesterol biosynthesis by mediating the retention of the SCAP-SREBP complex in the endoplasmic reticulum, thereby blocking the processing of sterol regulatory element-binding proteins (SREBPs) SREBF1/SREBP1 and SREBF2/SREBP2. Binds oxysterol, including 25-hydroxycholesterol, regulating interaction with SCAP and retention of the SCAP-SREBP complex in the endoplasmic reticulum. In presence of oxysterol, interacts with SCAP, retaining the SCAP-SREBP complex in the endoplasmic reticulum, thereby preventing SCAP from escorting SREBF1/SREBP1 and SREBF2/SREBP2 to the Golgi. Sterol deprivation or phosphorylation by PCK1 reduce oxysterol-binding, disrupting the interaction between INSIG1 and SCAP, thereby promoting Golgi transport of the SCAP-SREBP complex, followed by processing and nuclear translocation of SREBF1/SREBP1 and SREBF2/SREBP2. Also regulates cholesterol synthesis by regulating degradation of HMGCR: initiates the sterol-mediated ubiquitin-mediated endoplasmic reticulum-associated degradation (ERAD) of HMGCR via recruitment of the reductase to the ubiquitin ligases AMFR/gp78 and/or RNF139. Also regulates degradation of SOAT2/ACAT2 when the lipid levels are low: initiates the ubiquitin-mediated degradation of SOAT2/ACAT2 via recruitment of the ubiquitin ligases AMFR/gp78. This Homo sapiens (Human) protein is Insulin-induced gene 1 protein.